The following is a 416-amino-acid chain: Keratin, type I cuticular Ha1 (416 aa).

The interval 1-56 is head; it reads MPYNFCLPSLSCRTSCSSRPCVPPSCHSCTLPGACNIPANVSNCNWFCEGSFNGSE. Positions 56–367 constitute an IF rod domain; the sequence is EKETMQFLND…SLLESEDCNL (312 aa). The coil 1A stretch occupies residues 57–91; that stretch reads KETMQFLNDRLASYLEKVRQLERDNAELENLIRER. A linker 1 region spans residues 92–102; it reads SQQQEPLLCPS. A coil 1B region spans residues 103–203; that stretch reads YQSYFKTIEE…HEQEVNTLRC (101 aa). The segment at 204–219 is linker 12; sequence QLGDRLNVEVDAAPTV. Positions 220–363 are coil 2; it reads DLNRVLNETR…NTYRSLLESE (144 aa). Residues 364 to 416 form a tail region; that stretch reads DCNLPSNPCATTNACSKPIGPCLSNPCTPCVPPAPCTPCAPRPRCGPCNSFVR.

The protein belongs to the intermediate filament family.

The polypeptide is Keratin, type I cuticular Ha1 (KRT31) (Pan troglodytes (Chimpanzee)).